Here is a 518-residue protein sequence, read N- to C-terminus: MGSLPANNFESMSLCSQNPLDPDEFRRQGHMIIDFLADYYKNVEKYPVRTQVDPGYLKKRLPESAPYNPESIETILEDVTNDIIPGLTHWQSPNYFAYFPSSGSIAGFLGEMLSTGFNVVGFNWMSSPAATELESIVMNWLGQMLTLPKSFLFSSDGSSGGGGVLQGTTCEAILCTLTAARDKMLNKIGRENINKLVVYASDQTLSALQKAAQIAGINPKNFLAIATSKATNFGLSPNSLQSTILADIESGLVPLFLCATVGTTSSTAVDPIGPLCAVAKLHGIWVHIDAAYAGSACICPEFRHFIDGVEDADSFSLNAHKWFFTTLDCCCLWVKDSDSLVKALSTSPEYLKNKATDSKQVIDYKDWQIALSRRFRSMKLWLVLRSYGIANLRTFLRSHVKMAKHFQGLIGMDNRFEIVVPRTFAMVCFRLKPAAIFRKKIVEDDHIEAQTNEVNAKLLESVNASGKIYMTHAVVGGVYMIRFAVGATLTEERHVTGAWKVVQEHTDAILGALGEDVC.

Lys-321 carries the post-translational modification N6-(pyridoxal phosphate)lysine.

The protein belongs to the group II decarboxylase family. As to quaternary structure, homodimer. Pyridoxal 5'-phosphate is required as a cofactor. As to expression, predominantly expressed in the roots.

The enzyme catalyses L-tyrosine + H(+) = tyramine + CO2. It carries out the reaction L-dopa + H(+) = dopamine + CO2. The catalysed reaction is 5-hydroxy-L-tryptophan + H(+) = serotonin + CO2. Its function is as follows. Marginally higher substrate specificity for L-DOPA over L-tyrosine. This is Tyrosine/DOPA decarboxylase 1 (TYDC1) from Papaver somniferum (Opium poppy).